Here is a 97-residue protein sequence, read N- to C-terminus: Co-chaperonin GroES (97 aa).

It belongs to the GroES chaperonin family. In terms of assembly, heptamer of 7 subunits arranged in a ring. Interacts with the chaperonin GroEL.

The protein localises to the cytoplasm. Functionally, together with the chaperonin GroEL, plays an essential role in assisting protein folding. The GroEL-GroES system forms a nano-cage that allows encapsulation of the non-native substrate proteins and provides a physical environment optimized to promote and accelerate protein folding. GroES binds to the apical surface of the GroEL ring, thereby capping the opening of the GroEL channel. In Buchnera aphidicola subsp. Geoica urticularia, this protein is Co-chaperonin GroES.